Here is a 469-residue protein sequence, read N- to C-terminus: tRNA(Ile)-lysidine synthase (469 aa).

26–31 (SGGPDS) serves as a coordination point for ATP.

This sequence belongs to the tRNA(Ile)-lysidine synthase family.

Its subcellular location is the cytoplasm. It carries out the reaction cytidine(34) in tRNA(Ile2) + L-lysine + ATP = lysidine(34) in tRNA(Ile2) + AMP + diphosphate + H(+). Its function is as follows. Ligates lysine onto the cytidine present at position 34 of the AUA codon-specific tRNA(Ile) that contains the anticodon CAU, in an ATP-dependent manner. Cytidine is converted to lysidine, thus changing the amino acid specificity of the tRNA from methionine to isoleucine. The sequence is that of tRNA(Ile)-lysidine synthase from Shouchella clausii (strain KSM-K16) (Alkalihalobacillus clausii).